The chain runs to 542 residues: CTP synthase (542 aa).

Residues 1 to 265 (MARYVFITGG…DDEVLAAFGI (265 aa)) form an amidoligase domain region. S13 is a binding site for CTP. S13 lines the UTP pocket. Residues 14 to 19 (SLGKGI) and D71 contribute to the ATP site. Mg(2+)-binding residues include D71 and E139. Residues 146-148 (DIE), 186-191 (KTKPTQ), and K222 each bind CTP. UTP-binding positions include 186–191 (KTKPTQ) and K222. Residues 291-541 (TIAIVGKYTG…IEAATEQSRL (251 aa)) enclose the Glutamine amidotransferase type-1 domain. G353 lines the L-glutamine pocket. The Nucleophile; for glutamine hydrolysis role is filled by C380. L-glutamine is bound by residues 381–384 (FGMQ), E404, and R469. Catalysis depends on residues H514 and E516.

This sequence belongs to the CTP synthase family. In terms of assembly, homotetramer.

It catalyses the reaction UTP + L-glutamine + ATP + H2O = CTP + L-glutamate + ADP + phosphate + 2 H(+). It carries out the reaction L-glutamine + H2O = L-glutamate + NH4(+). The enzyme catalyses UTP + NH4(+) + ATP = CTP + ADP + phosphate + 2 H(+). It participates in pyrimidine metabolism; CTP biosynthesis via de novo pathway; CTP from UDP: step 2/2. Allosterically activated by GTP, when glutamine is the substrate; GTP has no effect on the reaction when ammonia is the substrate. The allosteric effector GTP functions by stabilizing the protein conformation that binds the tetrahedral intermediate(s) formed during glutamine hydrolysis. Inhibited by the product CTP, via allosteric rather than competitive inhibition. Catalyzes the ATP-dependent amination of UTP to CTP with either L-glutamine or ammonia as the source of nitrogen. Regulates intracellular CTP levels through interactions with the four ribonucleotide triphosphates. The protein is CTP synthase of Rhizobium etli (strain CIAT 652).